The sequence spans 554 residues: 3-(3-hydroxy-phenyl)propionate/3-hydroxycinnamic acid hydroxylase (554 aa).

FAD-binding positions include Gln17 to Lys46 and Phe285 to Asp295.

It belongs to the PheA/TfdB FAD monooxygenase family. FAD serves as cofactor.

It catalyses the reaction 3-(3-hydroxyphenyl)propanoate + NADH + O2 + H(+) = 3-(2,3-dihydroxyphenyl)propanoate + NAD(+) + H2O. The enzyme catalyses (2E)-3-(3-hydroxyphenyl)prop-2-enoate + NADH + O2 + H(+) = (2E)-3-(2,3-dihydroxyphenyl)prop-2-enoate + NAD(+) + H2O. Its pathway is aromatic compound metabolism; 3-phenylpropanoate degradation. In terms of biological role, catalyzes the insertion of one atom of molecular oxygen into position 2 of the phenyl ring of 3-(3-hydroxyphenyl)propionate (3-HPP) and hydroxycinnamic acid (3HCI). This is 3-(3-hydroxy-phenyl)propionate/3-hydroxycinnamic acid hydroxylase from Escherichia coli O157:H7.